Here is a 671-residue protein sequence, read N- to C-terminus: Anti-sigma-I factor RsgI2 (671 aa).

At 1–57 the chain is on the cytoplasmic side; that stretch reads MSHYTGIILKLESDRAIVLTDGLDFMELKLKPGMQRGQHVIFDESDLYSAGLITRYK. Positions 4–51 constitute a RsgI N-terminal anti-sigma domain; sequence YTGIILKLESDRAIVLTDGLDFMELKLKPGMQRGQHVIFDESDLYSAG. A helical membrane pass occupies residues 58–78; sequence SIIMPFSAFAAAAAVFLVILF. Over 79-671 the chain is Extracellular; it reads SLRFVSISQE…SGTLYWGIEP (593 aa). Disordered regions lie at residues 290–323 and 359–505; these read TEAQ…IPHT and PVPV…APTE. Over residues 359-379 the composition is skewed to low complexity; that stretch reads PVPVSTPKPVSTPAYSSTPTP. Residues 380–400 are compositionally biased toward pro residues; the sequence is ESTPVPVSTPKPASTPTPAST. A compositionally biased stretch (low complexity) spans 401–425; sequence PKPVSTPTHVSTPKPISTPTSTPRP. Residues 426–446 show a composition bias toward pro residues; sequence ASTPKPTSTPTPESTPKPTST. Positions 447-491 are enriched in low complexity; the sequence is PAPVSTPTSTPIPTYTSTPASTPIPAYTSTPTSIPTLTPATSPAP. The segment covering 492–502 has biased composition (pro residues); it reads TSSPTPIPSPA. The CBM3 domain maps to 508–671; the sequence is LLTKIELQAY…SGTLYWGIEP (164 aa). Ca(2+)-binding residues include Thr-554, Asp-556, Asp-637, Ser-640, and Asp-641.

Interacts (via RsgI N-terminal anti-sigma domain) with SigI2.

It is found in the cell membrane. Its function is as follows. Anti-sigma factor for SigI2. Negatively regulates SigI2 activity through direct interaction. Binding of the polysaccharide substrate to the extracellular C-terminal sensing domain of RsgI2 may induce a conformational change in its N-terminal cytoplasmic region, leading to the release and activation of SigI2. In Acetivibrio thermocellus (strain ATCC 27405 / DSM 1237 / JCM 9322 / NBRC 103400 / NCIMB 10682 / NRRL B-4536 / VPI 7372) (Clostridium thermocellum), this protein is Anti-sigma-I factor RsgI2.